Consider the following 121-residue polypeptide: Putative membrane protein insertion efficiency factor (121 aa).

Belongs to the UPF0161 family.

The protein resides in the cell inner membrane. Its function is as follows. Could be involved in insertion of integral membrane proteins into the membrane. This Rhodopseudomonas palustris (strain HaA2) protein is Putative membrane protein insertion efficiency factor.